A 334-amino-acid chain; its full sequence is Glyoxylate reductase (334 aa).

NADP(+) is bound by residues 158–161, 180–182, and 239–241; these read FGRI, SRT, and IAR. Active-site residues include R241 and E270. H288 acts as the Proton donor in catalysis. Position 288–290 (288–290) interacts with NADP(+); sequence HIG.

Belongs to the D-isomer specific 2-hydroxyacid dehydrogenase family. GyaR subfamily. In terms of assembly, homodimer.

It localises to the cytoplasm. The catalysed reaction is glycolate + NAD(+) = glyoxylate + NADH + H(+). This chain is Glyoxylate reductase, found in Thermococcus onnurineus (strain NA1).